The chain runs to 148 residues: ATP synthase epsilon chain (148 aa).

It belongs to the ATPase epsilon chain family. As to quaternary structure, F-type ATPases have 2 components, CF(1) - the catalytic core - and CF(0) - the membrane proton channel. CF(1) has five subunits: alpha(3), beta(3), gamma(1), delta(1), epsilon(1). CF(0) has three main subunits: a, b and c.

It is found in the cell membrane. Produces ATP from ADP in the presence of a proton gradient across the membrane. The polypeptide is ATP synthase epsilon chain (Streptococcus thermophilus (strain ATCC BAA-250 / LMG 18311)).